The chain runs to 694 residues: DNA ligase (694 aa).

NAD(+) is bound by residues 41-45 (DAEFD), 91-92 (SL), and Glu121. Lys123 (N6-AMP-lysine intermediate) is an active-site residue. Residues Arg144, Glu184, Lys300, and Lys324 each contribute to the NAD(+) site. Zn(2+) is bound by residues Cys418, Cys421, Cys437, and Cys443. One can recognise a BRCT domain in the interval 607–694 (SVLPTCEGLT…QGPPVQQVVD (88 aa)).

This sequence belongs to the NAD-dependent DNA ligase family. LigA subfamily. The cofactor is Mg(2+). Mn(2+) is required as a cofactor.

It carries out the reaction NAD(+) + (deoxyribonucleotide)n-3'-hydroxyl + 5'-phospho-(deoxyribonucleotide)m = (deoxyribonucleotide)n+m + AMP + beta-nicotinamide D-nucleotide.. Its function is as follows. DNA ligase that catalyzes the formation of phosphodiester linkages between 5'-phosphoryl and 3'-hydroxyl groups in double-stranded DNA using NAD as a coenzyme and as the energy source for the reaction. It is essential for DNA replication and repair of damaged DNA. The sequence is that of DNA ligase from Mycobacterium leprae (strain TN).